The primary structure comprises 428 residues: C4-dicarboxylate transport protein 1 (428 aa).

Helical transmembrane passes span 5 to 27 (FYKI…GHFE), 42 to 64 (IQLI…IAGM), 77 to 99 (ALLY…GHIF), 150 to 167 (ILQI…LSAM), 188 to 210 (IVHV…TIGK), 225 to 247 (TFYL…LTGF), 314 to 336 (IFIS…LAVA), and 351 to 373 (FITL…VLIL).

It belongs to the dicarboxylate/amino acid:cation symporter (DAACS) (TC 2.A.23) family.

The protein localises to the cell inner membrane. Functionally, responsible for the transport of dicarboxylates such as succinate, fumarate, and malate from the periplasm across the membrane. The protein is C4-dicarboxylate transport protein 1 (dctA1) of Ralstonia nicotianae (strain ATCC BAA-1114 / GMI1000) (Ralstonia solanacearum).